The sequence spans 260 residues: Ribonuclease PH (260 aa).

Phosphate-binding positions include Arg88 and Gly126–Arg128.

The protein belongs to the RNase PH family. As to quaternary structure, homohexameric ring arranged as a trimer of dimers.

The catalysed reaction is tRNA(n+1) + phosphate = tRNA(n) + a ribonucleoside 5'-diphosphate. In terms of biological role, phosphorolytic 3'-5' exoribonuclease that plays an important role in tRNA 3'-end maturation. Removes nucleotide residues following the 3'-CCA terminus of tRNAs; can also add nucleotides to the ends of RNA molecules by using nucleoside diphosphates as substrates, but this may not be physiologically important. Probably plays a role in initiation of 16S rRNA degradation (leading to ribosome degradation) during starvation. The sequence is that of Ribonuclease PH from Mycolicibacterium gilvum (strain PYR-GCK) (Mycobacterium gilvum (strain PYR-GCK)).